Here is a 497-residue protein sequence, read N- to C-terminus: Cytochrome P450 26A1 (497 aa).

C442 lines the heme pocket.

The protein belongs to the cytochrome P450 family. Heme is required as a cofactor. As to expression, expressed in most fetal and adult tissues with highest levels in adult liver, heart, pituitary gland, adrenal gland, placenta and regions of the brain. Expressed at high levels in lung, pancreas, skin and uterus (at protein level). Lower expression level is detected in spleen, kidney, intestine and adipose tissue (at protein level).

The protein localises to the endoplasmic reticulum membrane. Its subcellular location is the microsome membrane. The enzyme catalyses all-trans-retinoate + reduced [NADPH--hemoprotein reductase] + O2 = all-trans-(4S)-hydroxyretinoate + oxidized [NADPH--hemoprotein reductase] + H2O + H(+). The catalysed reaction is all-trans-(4S)-hydroxyretinoate + reduced [NADPH--hemoprotein reductase] + O2 = all-trans-(4S,16)-dihydroxyretinoate + oxidized [NADPH--hemoprotein reductase] + H2O + H(+). It carries out the reaction all-trans-retinoate + reduced [NADPH--hemoprotein reductase] + O2 = all-trans-18-hydroxyretinoate + oxidized [NADPH--hemoprotein reductase] + H2O + H(+). Functionally, a cytochrome P450 monooxygenase involved in the metabolism of retinoates (RAs), the active metabolites of vitamin A, and critical signaling molecules in animals. RAs exist as at least four different isomers: all-trans-RA (atRA), 9-cis-RA, 13-cis-RA, and 9,13-dicis-RA, where atRA is considered to be the biologically active isomer, although 9-cis-RA and 13-cis-RA also have activity. Catalyzes the hydroxylation of atRA primarily at C-4 and C-18, thereby contributing to the regulation of atRA homeostasis and signaling. Hydroxylation of atRA limits its biological activity and initiates a degradative process leading to its eventual elimination. Involved in the convertion of atRA to all-trans-4-oxo-RA. Able to metabolize other RAs such as 9-cis, 13-cis and 9,13-di-cis RA. Can oxidize all-trans-13,14-dihydroretinoate (DRA) to metabolites which could include all-trans-4-oxo-DRA, all-trans-4-hydroxy-DRA, all-trans-5,8-epoxy-DRA, and all-trans-18-hydroxy-DRA. May play a role in the oxidative metabolism of xenobiotics such as tazarotenic acid. The protein is Cytochrome P450 26A1 of Homo sapiens (Human).